The chain runs to 252 residues: Phosphoglycolate phosphatase (252 aa).

The Nucleophile role is filled by Asp13. The Mg(2+) site is built by Asp13, Asp15, and Asp192.

The protein belongs to the HAD-like hydrolase superfamily. CbbY/CbbZ/Gph/YieH family. As to quaternary structure, monomer. Mg(2+) is required as a cofactor. It depends on chloride as a cofactor.

The catalysed reaction is 2-phosphoglycolate + H2O = glycolate + phosphate. It functions in the pathway organic acid metabolism; glycolate biosynthesis; glycolate from 2-phosphoglycolate: step 1/1. In terms of biological role, specifically catalyzes the dephosphorylation of 2-phosphoglycolate. Is involved in the dissimilation of the intracellular 2-phosphoglycolate formed during the DNA repair of 3'-phosphoglycolate ends, a major class of DNA lesions induced by oxidative stress. The sequence is that of Phosphoglycolate phosphatase from Salmonella choleraesuis (strain SC-B67).